Consider the following 71-residue polypeptide: Putative antitoxin VapB14 (71 aa).

Putative antitoxin component of a possible type II toxin-antitoxin (TA) system. The cognate toxin is VapB14. The polypeptide is Putative antitoxin VapB14 (vapB14) (Mycobacterium tuberculosis (strain ATCC 25618 / H37Rv)).